Reading from the N-terminus, the 242-residue chain is GATA zinc finger domain-containing protein 1 (242 aa).

Residues 9–33 (CAVCKTQSSSMWKKGNQGEILCNGC) form a GATA-type zinc finger. A disordered region spans residues 44 to 85 (GASASSTIQQNNGGGKQSKQEIHRRSARLRSTKYKAPASEKK). Residues 45–54 (ASASSTIQQN) are compositionally biased toward low complexity.

The protein localises to the nucleus. Its function is as follows. Component of some chromatin complex recruited to chromatin sites methylated 'Lys-4' of histone H3 (H3K4me), with a preference for trimethylated form (H3K4me3). The chain is GATA zinc finger domain-containing protein 1 (gatad1) from Danio rerio (Zebrafish).